We begin with the raw amino-acid sequence, 350 residues long: WUSCHEL-related homeobox 1 (350 aa).

A DNA-binding region (homeobox; WUS-type) is located at residues 72–136 (MVSSRWNPTP…NHKARERQKR (65 aa)). The disordered stretch occupies residues 283-308 (TNTETCHRNGDDNKDQEQHEDCSNGE).

The protein belongs to the WUS homeobox family.

It localises to the nucleus. In terms of biological role, transcription factor which may be involved in developmental processes. The chain is WUSCHEL-related homeobox 1 (WOX1) from Arabidopsis thaliana (Mouse-ear cress).